Consider the following 454-residue polypeptide: Kynurenine 3-monooxygenase (454 aa).

This sequence belongs to the aromatic-ring hydroxylase family. KMO subfamily. Requires FAD as cofactor.

It carries out the reaction L-kynurenine + NADPH + O2 + H(+) = 3-hydroxy-L-kynurenine + NADP(+) + H2O. It participates in cofactor biosynthesis; NAD(+) biosynthesis; quinolinate from L-kynurenine: step 1/3. Its function is as follows. Catalyzes the hydroxylation of L-kynurenine (L-Kyn) to form 3-hydroxy-L-kynurenine (L-3OHKyn). Required for synthesis of quinolinic acid. In Salinispora arenicola (strain CNS-205), this protein is Kynurenine 3-monooxygenase.